The chain runs to 392 residues: Small ribosomal subunit protein bS1 (392 aa).

S1 motif domains are found at residues 16 to 90, 108 to 173, 194 to 262, and 279 to 348; these read GDKV…LSKR, DEII…LSRK, GDVI…LSIK, and DDVI…LSIK.

It belongs to the bacterial ribosomal protein bS1 family.

Binds mRNA; thus facilitating recognition of the initiation point. It is needed to translate mRNA with a short Shine-Dalgarno (SD) purine-rich sequence. The protein is Small ribosomal subunit protein bS1 (rpsA) of Staphylococcus haemolyticus (strain JCSC1435).